The primary structure comprises 692 residues: Formate hydrogenlyase transcriptional activator (692 aa).

One can recognise a GAF domain in the interval 202–344 (DIDELVSEVA…QIAERVAIAV (143 aa)). Positions 381-610 (IIGRSEAMYN…LENVVERAVL (230 aa)) constitute a Sigma-54 factor interaction domain. ATP is bound by residues 409–416 (GETGTGKE) and 472–481 (ADKSSLFLDE). Positions 663–682 (PKGAAQRLGLKRTTLLSRMK) form a DNA-binding region, H-T-H motif.

Required for induction of expression of the formate dehydrogenase H and hydrogenase-3 structural genes. In Salmonella typhimurium (strain SL1344), this protein is Formate hydrogenlyase transcriptional activator (fhlA).